Reading from the N-terminus, the 787-residue chain is LPS-assembly protein LptD (787 aa).

The signal sequence occupies residues 1 to 39 (MPRKTLLPLVPACDAAPRRKRLAAALLAVPGLVPAVSQA).

This sequence belongs to the LptD family. In terms of assembly, component of the lipopolysaccharide transport and assembly complex. Interacts with LptE and LptA.

The protein localises to the cell outer membrane. Together with LptE, is involved in the assembly of lipopolysaccharide (LPS) at the surface of the outer membrane. The sequence is that of LPS-assembly protein LptD from Burkholderia thailandensis (strain ATCC 700388 / DSM 13276 / CCUG 48851 / CIP 106301 / E264).